We begin with the raw amino-acid sequence, 344 residues long: MFNYYLQKVVKGENLSLDEMEQAMEMIMEGKVTHSQLSGFLVALHMKGETVEEITASAKVMKEKATPISIESGELMDTCGTGGDAKGTFNISTAVAFILAAAGVVVAKHGNRSVSSKSGSADVLESLGINISLPPSSVERCLKEINIAFLFAQDFHKATKHAAVPRKELGIRTIFNVLGPLTNPANIKYQLMGIYDPKLVYPIAEVLNNLGVKRAMVVHGSEGIDEFSLSGKNKVAFLNEGKIEKLEISPEDLGLEKYSIQEIQGGSAEENKRIILNIFNGEMGPKRDVVVLNTAAGLYVANKVNSLEEGINFAQEIIDSGKAMKKLEEMVEFTNFLSLQAKTS.

5-phospho-alpha-D-ribose 1-diphosphate-binding positions include Gly-80, 83 to 84 (GD), Thr-88, 90 to 93 (NIST), 108 to 116 (KHGNRSVSS), and Ser-120. Gly-80 lines the anthranilate pocket. Ser-92 contacts Mg(2+). Residue Asn-111 coordinates anthranilate. Anthranilate is bound at residue Arg-166. Mg(2+)-binding residues include Asp-225 and Glu-226.

This sequence belongs to the anthranilate phosphoribosyltransferase family. In terms of assembly, homodimer. Mg(2+) is required as a cofactor.

It carries out the reaction N-(5-phospho-beta-D-ribosyl)anthranilate + diphosphate = 5-phospho-alpha-D-ribose 1-diphosphate + anthranilate. It participates in amino-acid biosynthesis; L-tryptophan biosynthesis; L-tryptophan from chorismate: step 2/5. Its function is as follows. Catalyzes the transfer of the phosphoribosyl group of 5-phosphorylribose-1-pyrophosphate (PRPP) to anthranilate to yield N-(5'-phosphoribosyl)-anthranilate (PRA). In Petrotoga mobilis (strain DSM 10674 / SJ95), this protein is Anthranilate phosphoribosyltransferase.